A 597-amino-acid chain; its full sequence is Intrastrand cross-link recognition protein (597 aa).

Over residues 1-28 (MNTGISPKQDDASNSNLLNIGQDHSLQY) the composition is skewed to polar residues. Disordered regions lie at residues 1-134 (MNTG…NVNA), 174-212 (QTNP…LAAS), 259-291 (SAGN…QQQM), and 327-364 (HLQQ…PKRP). Over residues 32 to 42 (EHNDSQYRDAS) the composition is skewed to basic and acidic residues. 5 stretches are compositionally biased toward low complexity: residues 52-134 (QFQA…NVNA), 178-212 (SVTG…LAAS), 260-271 (AGNAAGNANTAT), 281-291 (QPQLTHHQQQM), and 327-337 (HLQQQQQQQQH). Positions 351–361 (ERRKQLKKQGP) are enriched in basic residues. 2 consecutive DNA-binding regions (HMG box) follow at residues 361 to 429 (PKRP…DAYE) and 434 to 502 (PKRP…PDEN). Position 532 is a phosphoserine (S532). 2 stretches are compositionally biased toward low complexity: residues 543–556 (SVTG…NPNT) and 564–580 (LQQQ…QQQQ). A disordered region spans residues 543-597 (SVTGSNSNSTNPNTPVSPPISLQQQPLQQQQQQQQQQQHMLLADPTTNGSIIKNE). The span at 587-597 (PTTNGSIIKNE) shows a compositional bias: polar residues.

It localises to the nucleus. Functionally, binds to platinated DNA and confers sensitivity to the anticancer drug cisplatin. Activate the expression of the COX5B gene. This chain is Intrastrand cross-link recognition protein (IXR1), found in Saccharomyces cerevisiae (strain ATCC 204508 / S288c) (Baker's yeast).